Consider the following 352-residue polypeptide: Gap junction alpha-4 protein (352 aa).

Residues 2 to 23 (GDWEFLEKLLDQVQEHSTSIGK) lie on the Cytoplasmic side of the membrane. A helical membrane pass occupies residues 24 to 46 (IWLMVLFIFRILILGLAGESVWG). The Extracellular portion of the chain corresponds to 47–76 (DEQSDFICNTEQPGCTNVCYDKAFPISHVR). A helical membrane pass occupies residues 77–99 (YWVLQFLFVSTPTLFYLGHVIYL). Residues 100-153 (SRREEKLKQKESELRALDDKEQVEQAIAIIEKKKMKLYIQEDGTVKIKGALMCT) are Cytoplasmic-facing. A helical transmembrane segment spans residues 154 to 176 (YLTSVIFKSLFEAGFLLGQWYLY). Topologically, residues 177-208 (GFVMTPIYVCERVPCPHKVDCFVSRPMEKTIF) are extracellular. The chain crosses the membrane as a helical span at residues 209-231 (IVFMLVVSLISLFLNVLELIHLV). The Cytoplasmic segment spans residues 232–352 (CKSMIDTLKK…SSSASKKQYV (121 aa)). Positions 330-352 (KTHSTMEKPSTRASSSASKKQYV) are disordered. Positions 340–352 (TRASSSASKKQYV) are enriched in polar residues.

The protein belongs to the connexin family. Alpha-type (group II) subfamily. A connexon is composed of a hexamer of connexins.

Its subcellular location is the cell membrane. It is found in the cell junction. The protein localises to the gap junction. Its function is as follows. One gap junction consists of a cluster of closely packed pairs of transmembrane channels, the connexons, through which materials of low MW diffuse from one cell to a neighboring cell. This is Gap junction alpha-4 protein (gja4) from Xenopus tropicalis (Western clawed frog).